The chain runs to 444 residues: UPF0761 membrane protein RC1_0578 (444 aa).

The next 6 helical transmembrane spans lie at 49–69, 103–123, 145–165, 186–206, 219–239, and 248–268; these read LLALVPLLTVTFAIFSAFPAY, AAALTGFGVIGLSLTSILLFF, LLSFWAVLTIMPLLLGASLSV, FMLPGLLEAAAFTLMFLMIPN, IAAALLMEVSKVGFGLYIAAF, and ALSVIPIFLFWLYTVWSVVLF. Positions 423–444 are disordered; the sequence is SGQPSGQVETAVRQRTGLQGRI.

The protein belongs to the UPF0761 family.

Its subcellular location is the cell inner membrane. The protein is UPF0761 membrane protein RC1_0578 of Rhodospirillum centenum (strain ATCC 51521 / SW).